Reading from the N-terminus, the 274-residue chain is Putative pyruvate, phosphate dikinase regulatory protein (274 aa).

153 to 160 is an ADP binding site; sequence GISRTSKT.

Belongs to the pyruvate, phosphate/water dikinase regulatory protein family. PDRP subfamily.

The catalysed reaction is N(tele)-phospho-L-histidyl/L-threonyl-[pyruvate, phosphate dikinase] + ADP = N(tele)-phospho-L-histidyl/O-phospho-L-threonyl-[pyruvate, phosphate dikinase] + AMP + H(+). It catalyses the reaction N(tele)-phospho-L-histidyl/O-phospho-L-threonyl-[pyruvate, phosphate dikinase] + phosphate + H(+) = N(tele)-phospho-L-histidyl/L-threonyl-[pyruvate, phosphate dikinase] + diphosphate. In terms of biological role, bifunctional serine/threonine kinase and phosphorylase involved in the regulation of the pyruvate, phosphate dikinase (PPDK) by catalyzing its phosphorylation/dephosphorylation. In Bartonella henselae (strain ATCC 49882 / DSM 28221 / CCUG 30454 / Houston 1) (Rochalimaea henselae), this protein is Putative pyruvate, phosphate dikinase regulatory protein.